Here is a 109-residue protein sequence, read N- to C-terminus: Putative double-stranded DNA mimic protein YciU (109 aa).

It belongs to the putative dsDNA mimic protein family.

Its function is as follows. May act as a double-stranded DNA (dsDNA) mimic. Probably regulates the activity of a dsDNA-binding protein. This is Putative double-stranded DNA mimic protein YciU from Escherichia coli O45:K1 (strain S88 / ExPEC).